A 1356-amino-acid chain; its full sequence is Tenascin-R (1356 aa).

The N-terminal stretch at 1–31 (MGIEGETVVLKNMLIGVNLILLGSMLKPSEC) is a signal peptide. Residue Asn55 is glycosylated (N-linked (GlcNAc...) asparagine). A coiled-coil region spans residues 127-157 (CASSAQVLQELLSRIEMLEREVSVLRDQCNT). Ser176 is a glycosylation site (O-linked (Xyl...) (chondroitin sulfate) serine). N-linked (GlcNAc...) asparagine glycosylation is found at Asn180 and Asn198. EGF-like domains lie at 188 to 199 (CICNEGWFGKNC), 204 to 230 (CPLG…GDDC), and 235 to 261 (CPTD…GEDC). O-linked (Xyl...) (chondroitin sulfate) serine glycosylation occurs at Ser271. The N-linked (GlcNAc...) asparagine glycan is linked to Asn278. EGF-like domains follow at residues 281–292 (CLCQEGYAGEDC) and 293–324 (SQRR…PDCS). 2 cysteine pairs are disulfide-bonded: Cys297/Cys307 and Cys314/Cys323. Ser302 carries an O-linked (Xyl...) (chondroitin sulfate) serine glycan. Fibronectin type-III domains are found at residues 328-419 (PPED…TPQG), 420-504 (LQFK…TVID), 505-596 (GPTQ…IDAP), 597-686 (KNLR…TELD), 687-776 (SPRD…FRPI), 777-864 (SHLH…TGID), 865-953 (PPKN…AMDS), 954-1040 (PMDL…TLLD), and 1041-1129 (PPAN…GGRV). Asn391, Asn469, and Asn580 each carry an N-linked (GlcNAc...) asparagine glycan. Ser723 carries the phosphoserine modification. 6 N-linked (GlcNAc...) asparagine glycosylation sites follow: Asn790, Asn868, Asn873, Asn1034, Asn1044, and Asn1259. The Fibrinogen C-terminal domain occupies 1127 to 1342 (GRVFSHPQDC…FVEMKMRPYI (216 aa)).

Belongs to the tenascin family. Forms oligomers. Interacts with TNC and FN1. Interacts with BCAN and ACAN in a calcium -dependent manner. Interacts with CNTN1, SCN2B, PTPRZ1, and CSPG3. Post-translationally, contains N-linked oligosaccharides, O-linked sialylated structures. Contains O-linked chondroitin sulfate glycosaminoglycans. Contains N-linked oligosaccharides with a sulfated carbohydrate structure type GalNAc-4-SO4 or HNK-1 (SO4-3-GlcUABeta1,3GalBeta1,4GlcNAc). The levels of HNK-1 rise and fall in parallel to those of TNR during postnatal development of the cerebellum. In contrast, levels of GalNAc-4-SO4 are regulated independently from those of TNR, rising late in cerebellar development and continuing into adulthood. Early in postnatal development, GalNAc-4-SO4 is found predominantly on isoform 1, whereas in the adult it is predominantly on isoform 2. Brain-specific. Expressed in oligodendrocytes and small subsets of neurons (mainly interneurons and motoneurons) of the cerebellum, hippocampus and olfactory bulb. Expressed in dorsal root ganglia.

It is found in the secreted. Its subcellular location is the extracellular space. The protein resides in the extracellular matrix. Its function is as follows. Neural extracellular matrix (ECM) protein involved in interactions with different cells and matrix components. Theses interactions can influence cellular behavior by either evoking a stable adhesion and differentiation, or repulsion and inhibition of neurite growth. Binding to cell surface gangliosides inhibits RGD-dependent integrin-mediated cell adhesion and results in an inhibition of PTK2/FAK1 (FAK) phosphorylation and cell detachment. Binding to membrane surface sulfatides results in a oligodendrocyte adhesion and differentiation. Interaction with CNTN1 induces a repulsion of neurons and an inhibition of neurite outgrowth. Interacts with SCN2B may play a crucial role in clustering and regulation of activity of sodium channels at nodes of Ranvier. TNR-linked chondroitin sulfate glycosaminoglycans are involved in the interaction with FN1 and mediates inhibition of cell adhesion and neurite outgrowth. The highly regulated addition of sulfated carbohydrate structure may modulate the adhesive properties of TNR over the course of development and during synapse maintenance. This Rattus norvegicus (Rat) protein is Tenascin-R (Tnr).